A 151-amino-acid polypeptide reads, in one-letter code: Nucleoside diphosphate kinase (151 aa).

ATP-binding residues include Lys-10, Phe-58, Arg-86, Thr-92, Arg-103, and Asn-113. His-116 functions as the Pros-phosphohistidine intermediate in the catalytic mechanism.

It belongs to the NDK family. As to quaternary structure, homotetramer. Requires Mg(2+) as cofactor.

Its subcellular location is the cytoplasm. It carries out the reaction dZDP + ATP = dZTP + ADP. It catalyses the reaction a 2'-deoxyribonucleoside 5'-diphosphate + ATP = a 2'-deoxyribonucleoside 5'-triphosphate + ADP. The enzyme catalyses a ribonucleoside 5'-diphosphate + ATP = a ribonucleoside 5'-triphosphate + ADP. It participates in purine metabolism. Major role in the synthesis of nucleoside triphosphates other than ATP. The ATP gamma phosphate is transferred to the NDP beta phosphate via a ping-pong mechanism, using a phosphorylated active-site intermediate. Functionally, (Microbial infection) Catalyzes the phosphorylation of dZDP to dZTP, when the bacterium is infected by a phage that produces the substrate for the synthesis of dZTP (2- amino-2'-deoxyadenosine 5'-triphosphate), which is then used by the phage as a DNA polymerase substrate. This Synechococcus sp. (strain CC9902) protein is Nucleoside diphosphate kinase.